The sequence spans 2316 residues: Receptor-type tyrosine-protein phosphatase zeta (2316 aa).

An N-terminal signal peptide occupies residues 1–24; it reads MRILQSFLACVQLLCVCRLDWAYG. The Extracellular portion of the chain corresponds to 25–1637; it reads YYRQQRKLVE…LAEGLESEKK (1613 aa). The Alpha-carbonic anhydrase domain maps to 36–300; the sequence is IGWSYTGALN…KFSRQVFSSY (265 aa). Disulfide bonds link cysteine 56-cysteine 240 and cysteine 133-cysteine 264. 7 N-linked (GlcNAc...) asparagine glycosylation sites follow: asparagine 105, asparagine 134, asparagine 223, asparagine 232, asparagine 324, asparagine 381, and asparagine 497. A Fibronectin type-III domain is found at 314–413; it reads EPENVQADPE…LIVDMPTEDA (100 aa). 2 disordered regions span residues 433–499 and 518–537; these read YGKG…LNTS and LPSQIGTNLPPHSVEGTSAS. Asparagine 552 carries N-linked (GlcNAc...) asparagine glycosylation. Serine 572 and serine 576 each carry phosphoserine. Disordered stretches follow at residues 586-624 and 636-720; these read KLDSGADDSSGSSPASSTVPFSTDNLSHGYTSSSDTPEA and RNAL…EMPH. Residues 592–602 show a composition bias toward low complexity; that stretch reads DDSSGSSPASS. O-linked (Xyl...) (chondroitin sulfate) serine glycosylation is present at serine 595. The segment covering 603-621 has biased composition (polar residues); it reads TVPFSTDNLSHGYTSSSDT. Asparagine 610 is a glycosylation site (N-linked (GlcNAc...) asparagine). Phosphoserine; alternate is present on serine 645. Serine 645 is a glycosylation site (O-linked (Xyl...) (chondroitin sulfate) serine; alternate). Position 647 is a phosphoserine (serine 647). The span at 666–675 shows a compositional bias: polar residues; that stretch reads TDLTTQSETG. N-linked (GlcNAc...) asparagine glycosylation is present at asparagine 685. A compositionally biased stretch (polar residues) spans 699 to 711; sequence ETFSPDATASRGP. Asparagine 786 is a glycosylation site (N-linked (GlcNAc...) asparagine). Serine 1005 carries an O-linked (Xyl...) (chondroitin sulfate) serine glycan. N-linked (GlcNAc...) asparagine glycans are attached at residues asparagine 1025 and asparagine 1058. Disordered stretches follow at residues 1141 to 1172, 1204 to 1228, 1401 to 1521, and 1545 to 1622; these read QASGDTWLKPGLSTNSEPALSDTASSEVSHPS, KTALPSGPRDPVLTETPMVEQSSSS, LLPS…DGRE, and TSDE…NSSH. Residues 1152 to 1172 show a composition bias toward polar residues; sequence LSTNSEPALSDTASSEVSHPS. Residues 1401–1413 show a composition bias toward polar residues; sequence LLPSKATSKPTHS. The span at 1425 to 1439 shows a compositional bias: acidic residues; the sequence is EDGDDYDDDDYDDID. Asparagine 1463 carries an N-linked (GlcNAc...) asparagine glycan. Polar residues predominate over residues 1464-1478; it reads DSDTQESSLVDQSDP. O-linked (Xyl...) (chondroitin sulfate) serine glycosylation is found at serine 1550 and serine 1552. Composition is skewed to polar residues over residues 1555 to 1569 and 1595 to 1609; these read GTSDSLNDNETSTDF and PRSSTPSVTSGHSGV. Asparagine 1563 carries N-linked (GlcNAc...) asparagine glycosylation. A compositionally biased stretch (low complexity) spans 1610-1621; sequence SNSSEAEASNSS. 2 N-linked (GlcNAc...) asparagine glycosylation sites follow: asparagine 1611 and asparagine 1619. The chain crosses the membrane as a helical span at residues 1638–1663; it reads AVIPLVIVSALTFICLVVLVGILIYW. At 1664-2316 the chain is on the cytoplasmic side; it reads RKCFQTAHFY…NIAESLESLV (653 aa). A phosphothreonine mark is found at threonine 1685 and threonine 1688. 2 consecutive Tyrosine-protein phosphatase domains span residues 1718 to 1993 and 2024 to 2283; these read FTEE…LVEA and LEKQ…VLSL. Residues aspartate 1902, 1934-1940, and glutamine 1978 each bind substrate; that span reads CSAGVGR. The active-site Phosphocysteine intermediate is the cysteine 1934. Position 2056 is a phosphoserine (serine 2056).

This sequence belongs to the protein-tyrosine phosphatase family. Receptor class 5 subfamily. In terms of assembly, interacts with tenascin. Interacts with N-CAM and NG-CAM. The carbonic-anhydrase like domain interacts with CNTN1 (contactin). Interacts with PTN. Interaction with PTN promotes formation of homooligomers; oligomerization impairs phosphatase activity. Interacts (via chondroitin sulfate chains) with MDK (via C-terminal); this interaction is inhibited by PTN; this interaction promotes neuronal migration. In terms of tissue distribution, nervous tissue specific.

It is found in the cell membrane. The protein localises to the secreted. It carries out the reaction O-phospho-L-tyrosyl-[protein] + H2O = L-tyrosyl-[protein] + phosphate. Its function is as follows. Protein tyrosine phosphatase that negatively regulates oligodendrocyte precursor proliferation in the embryonic spinal cord. Required for normal differentiation of the precursor cells into mature, fully myelinating oligodendrocytes. May play a role in protecting oligondendrocytes against apoptosis. May play a role in the establishment of contextual memory, probably via the dephosphorylation of proteins that are part of important signaling cascades. Isoform 3 (phosphacan), previously designated 3F8 chondroitin sulfate proteoglycan or 3H1 keratan sulfate proteoglycan depending on the glycosylation status, is a soluble nervous tissue-specific proteoglycan. It is synthesized by glia and binds to neurons and to the neural cell adhesion molecules tenascin, N-CAM or NG-CAM but not to laminin and fibronectin. Phosphacan acts as a potent inhibitor of cell adhesion and neurite outgrowth. This chain is Receptor-type tyrosine-protein phosphatase zeta (Ptprz1), found in Rattus norvegicus (Rat).